The chain runs to 81 residues: Cytotoxin 5 (81 aa).

The N-terminal stretch at M1–T21 is a signal peptide. Disulfide bonds link C24–C42, C35–C59, C63–C74, and C75–C80.

Belongs to the three-finger toxin family. Short-chain subfamily. Type IA cytotoxin sub-subfamily. As to quaternary structure, monomer in solution; Homodimer and oligomer in the presence of negatively charged lipids forming a pore with a size ranging between 20 and 30 Angstroms. In terms of tissue distribution, expressed by the venom gland.

It is found in the secreted. It localises to the target cell membrane. In terms of biological role, shows cytolytic activity on many different cells by forming pore in lipid membranes. In vivo, increases heart rate or kills the animal by cardiac arrest. In addition, it binds to heparin with high affinity, interacts with Kv channel-interacting protein 1 (KCNIP1) in a calcium-independent manner, and binds to integrin alpha-V/beta-3 (ITGAV/ITGB3) with moderate affinity. In Naja atra (Chinese cobra), this protein is Cytotoxin 5.